A 346-amino-acid polypeptide reads, in one-letter code: Melanoma-associated antigen B3 (346 aa).

Positions 1–35 (MPRGQKSTLHAREKRQQTRGQTQDHQGAQITATNK) are disordered. The segment covering 18–33 (TRGQTQDHQGAQITAT) has biased composition (polar residues). An MAGE domain is found at 111-310 (LIMKTNMLVQ…SAFQFWYEEA (200 aa)).

Expressed in testis.

The protein is Melanoma-associated antigen B3 (MAGEB3) of Homo sapiens (Human).